The primary structure comprises 41 residues: Large ribosomal subunit protein bL36 (41 aa).

This sequence belongs to the bacterial ribosomal protein bL36 family.

The sequence is that of Large ribosomal subunit protein bL36 from Rhodopseudomonas palustris (strain BisB18).